We begin with the raw amino-acid sequence, 257 residues long: tRNA-cytidine(32) 2-sulfurtransferase (257 aa).

The PP-loop motif signature appears at 37–42; the sequence is SGGKDS. Positions 112, 115, and 202 each coordinate [4Fe-4S] cluster.

It belongs to the TtcA family. As to quaternary structure, homodimer. Requires Mg(2+) as cofactor. The cofactor is [4Fe-4S] cluster.

The protein localises to the cytoplasm. The enzyme catalyses cytidine(32) in tRNA + S-sulfanyl-L-cysteinyl-[cysteine desulfurase] + AH2 + ATP = 2-thiocytidine(32) in tRNA + L-cysteinyl-[cysteine desulfurase] + A + AMP + diphosphate + H(+). Its pathway is tRNA modification. Its function is as follows. Catalyzes the ATP-dependent 2-thiolation of cytidine in position 32 of tRNA, to form 2-thiocytidine (s(2)C32). The sulfur atoms are provided by the cysteine/cysteine desulfurase (IscS) system. The sequence is that of tRNA-cytidine(32) 2-sulfurtransferase from Geobacter sulfurreducens (strain ATCC 51573 / DSM 12127 / PCA).